The primary structure comprises 498 residues: Probable cytosol aminopeptidase (498 aa).

2 residues coordinate Mn(2+): Lys-263 and Asp-268. Lys-275 is an active-site residue. Asp-286, Asp-345, and Glu-347 together coordinate Mn(2+). Arg-349 is a catalytic residue.

Belongs to the peptidase M17 family. It depends on Mn(2+) as a cofactor.

The protein localises to the cytoplasm. The catalysed reaction is Release of an N-terminal amino acid, Xaa-|-Yaa-, in which Xaa is preferably Leu, but may be other amino acids including Pro although not Arg or Lys, and Yaa may be Pro. Amino acid amides and methyl esters are also readily hydrolyzed, but rates on arylamides are exceedingly low.. It carries out the reaction Release of an N-terminal amino acid, preferentially leucine, but not glutamic or aspartic acids.. Its function is as follows. Presumably involved in the processing and regular turnover of intracellular proteins. Catalyzes the removal of unsubstituted N-terminal amino acids from various peptides. In Rhodopseudomonas palustris (strain BisA53), this protein is Probable cytosol aminopeptidase.